Here is a 396-residue protein sequence, read N- to C-terminus: Elongation factor Tu (396 aa).

The region spanning 10–206 (KPHVNVGTIG…ALDSYIPTPE (197 aa)) is the tr-type G domain. The G1 stretch occupies residues 19–26 (GHVDHGKT). 19 to 26 (GHVDHGKT) serves as a coordination point for GTP. Mg(2+) is bound at residue Thr26. Positions 60-64 (GITIN) are G2. The G3 stretch occupies residues 81–84 (DCPG). Residues 81 to 85 (DCPGH) and 136 to 139 (NKCD) contribute to the GTP site. The tract at residues 136–139 (NKCD) is G4. A G5 region spans residues 174–176 (SAL).

This sequence belongs to the TRAFAC class translation factor GTPase superfamily. Classic translation factor GTPase family. EF-Tu/EF-1A subfamily. As to quaternary structure, monomer.

The protein localises to the cytoplasm. The catalysed reaction is GTP + H2O = GDP + phosphate + H(+). Its function is as follows. GTP hydrolase that promotes the GTP-dependent binding of aminoacyl-tRNA to the A-site of ribosomes during protein biosynthesis. The chain is Elongation factor Tu from Aromatoleum aromaticum (strain DSM 19018 / LMG 30748 / EbN1) (Azoarcus sp. (strain EbN1)).